The following is a 126-amino-acid chain: Defensin-like protein 183 (126 aa).

The first 26 residues, 1 to 26, serve as a signal peptide directing secretion; it reads MEKALSLVVFIIFSIMLASVENKVNA. Disulfide bonds link Cys29–Cys68, Cys36–Cys55, Cys39–Cys62, Cys43–Cys64, Cys80–Cys126, Cys91–Cys111, Cys96–Cys120, and Cys100–Cys122.

Belongs to the DEFL family.

Its subcellular location is the secreted. This Arabidopsis thaliana (Mouse-ear cress) protein is Defensin-like protein 183 (LCR19).